Reading from the N-terminus, the 253-residue chain is MVRLTTELFAERPQFVNSVNMREINLRGQKIPVIENMGVTRDQFDVIDLTDNDIRKLDNFPTFSRLNTLYLHNNRINYIAPDIATKLPNLKTLALTNNNICELGDIEPLAECKKLEYVTFIGNPITHKDNYRMYMIYKLPTVRVIDFNRVRLTEREAAKKMFKGKSGKKARDAIQKSVHTEDPSEIEPNENSSGGGARLTDEDREKIKEAIKNAKSLSEVNYLQSILASGKVPEKGWNRQMDQNGADGEAMES.

LRR repeat units lie at residues 20–41, 43–64, 65–86, and 89–110; these read NMRE…GVTR, QFDV…PTFS, RLNT…IATK, and NLKT…EPLA. Residues 123 to 161 form the LRRCT domain; it reads NPITHKDNYRMYMIYKLPTVRVIDFNRVRLTEREAAKKM. Disordered stretches follow at residues 163 to 205 and 232 to 253; these read KGKS…EDRE and VPEK…AMES. A compositionally biased stretch (basic and acidic residues) spans 169 to 182; it reads KARDAIQKSVHTED.

This sequence belongs to the U2 small nuclear ribonucleoprotein A family. As to quaternary structure, interacts with rnp-3.

Its subcellular location is the nucleus. This protein is associated with sn-RNP U2. It helps the A' protein to bind stem loop IV of U2 snRNA. Required maternally for early embryonic development and zygotically for germline and somatic development. Has a role in the switch from mitosis to meiosis. Might function in alternative splicing. The protein is Probable U2 small nuclear ribonucleoprotein A' (mog-2) of Caenorhabditis elegans.